The sequence spans 377 residues: WAT1-related protein At3g56620 (377 aa).

Helical transmembrane passes span 13-33 (FAMV…KVVL), 40-60 (YVLV…FALL), 67-87 (PKMT…GPLI), 102-122 (TFAG…SIIC), 142-162 (LVIV…ITFL), 183-203 (VFLL…AATL), 210-230 (LSLS…LTFV), 235-255 (LSAW…AGIM), 274-294 (IFVT…GFLI), and 299-319 (LNLG…TVLW). EamA domains follow at residues 22–152 (YAGM…MLMI) and 190–318 (FSWA…CTVL).

It belongs to the drug/metabolite transporter (DMT) superfamily. Plant drug/metabolite exporter (P-DME) (TC 2.A.7.4) family.

The protein resides in the membrane. This is WAT1-related protein At3g56620 from Arabidopsis thaliana (Mouse-ear cress).